The sequence spans 265 residues: R-spondin-1 (265 aa).

The signal sequence occupies residues 1 to 20; that stretch reads MRLGLCVVALVLSWTHIAVG. FU repeat units follow at residues 34–85 and 91–135; these read AEGS…GYFD and MNKC…GSTA. 11 disulfides stabilise this stretch: cysteine 40-cysteine 47, cysteine 44-cysteine 53, cysteine 56-cysteine 75, cysteine 79-cysteine 94, cysteine 97-cysteine 105, cysteine 102-cysteine 111, cysteine 114-cysteine 125, cysteine 129-cysteine 142, cysteine 148-cysteine 190, cysteine 159-cysteine 166, and cysteine 199-cysteine 206. Asparagine 137 is a glycosylation site (N-linked (GlcNAc...) asparagine). Positions 147-207 constitute a TSP type-1 domain; sequence QCEMSEWSPW…KCTVRRTPCP (61 aa). C-linked (Man) tryptophan glycosylation occurs at tryptophan 153. A C-linked (Man) tryptophan; by DPY19L3 glycan is attached at tryptophan 156. 2 disordered regions span residues 173-192 and 201-265; these read EERT…TCSD and VRRT…TWAQ. A compositionally biased stretch (low complexity) spans 245-257; the sequence is QQQPQPGTTGPLT.

The protein belongs to the R-spondin family. Interacts with ZNRF3; promoting indirect interaction between ZNRF3 and LGR4 and membrane clearance of ZNRF3. Identified in a complex composed of RNF43, LGR5 and RSPO1. Interacts with the extracellular domain of FZD8 and LRP6. It however does not form a ternary complex with FZD8 and LRP6. Interacts with WNT1. Binds heparin. Interacts with LGR4, LGR5 and LGR6. Interacts (via FU repeats) with KREM1. In terms of processing, C-, and N-glycosylated. N-glycosylation at Asn-137, negatively influences its secretion and enhancing effect on Wnt/beta-catenin signaling. C-mannosylation at Trp-156 by DPY19L3 is required for its secretion an regulates the enhancing activity of Wnt signaling. In terms of tissue distribution, expressed in the dorsal part of the neural tube on 10 and 12 dpc, especially in the boundary region between roof plate and neuroepithelium. This expression is enhanced in the rostral part. Also expressed in other tissues such as truncal region neighboring forelimbs and mesenchymal tissues around the nasal cavity.

The protein resides in the secreted. The protein localises to the nucleus. Functionally, activator of the canonical Wnt signaling pathway by acting as a ligand for LGR4-6 receptors. Upon binding to LGR4-6 (LGR4, LGR5 or LGR6), LGR4-6 associate with phosphorylated LRP6 and frizzled receptors that are activated by extracellular Wnt receptors, triggering the canonical Wnt signaling pathway to increase expression of target genes. Also regulates the canonical Wnt/beta-catenin-dependent pathway and non-canonical Wnt signaling by acting as an inhibitor of ZNRF3, an important regulator of the Wnt signaling pathway. Acts as a ligand for frizzled FZD8 and LRP6. May negatively regulate the TGF-beta pathway. Has a essential roles in ovary determination. Regulates Wnt signaling by antagonizing DKK1/KREM1-mediated internalization of LRP6 through an interaction with KREM1. In Mus musculus (Mouse), this protein is R-spondin-1 (Rspo1).